Here is a 253-residue protein sequence, read N- to C-terminus: Ubiquinone biosynthesis O-methyltransferase (253 aa).

The S-adenosyl-L-methionine site is built by Arg47, Gly78, Asp99, and Met141.

The protein belongs to the methyltransferase superfamily. UbiG/COQ3 family.

The enzyme catalyses a 3-demethylubiquinol + S-adenosyl-L-methionine = a ubiquinol + S-adenosyl-L-homocysteine + H(+). It carries out the reaction a 3-(all-trans-polyprenyl)benzene-1,2-diol + S-adenosyl-L-methionine = a 2-methoxy-6-(all-trans-polyprenyl)phenol + S-adenosyl-L-homocysteine + H(+). The protein operates within cofactor biosynthesis; ubiquinone biosynthesis. O-methyltransferase that catalyzes the 2 O-methylation steps in the ubiquinone biosynthetic pathway. In Rhodopseudomonas palustris (strain BisA53), this protein is Ubiquinone biosynthesis O-methyltransferase.